A 172-amino-acid polypeptide reads, in one-letter code: Scytalone dehydratase (172 aa).

Residues Y30, Y50, and F53 each coordinate substrate. Active-site residues include H85 and H110. Residue N131 coordinates substrate.

This sequence belongs to the scytalone dehydratase family. As to quaternary structure, homotrimer. Each subunit contains an active site, located in the central part of the hydrophobic core of the monomer, which functions independently.

The protein localises to the endosome. It carries out the reaction scytalone = 1,3,8-trihydroxynaphthalene + H2O. Its pathway is pigment biosynthesis; melanin biosynthesis. (N-phenoxypropyl)-carboxamides such as carpropamid and derivatives of norephedrine act as inhibitors of scytalone dehydratase activity. Its function is as follows. Scytalone dehydratase; part of the gene cluster that mediates the biosynthesis of dihydroxynaphthalene melanin, a bluish-green pigment and a structural component of the conidial wall. Within the pathway, catalyzes the dehydration of scytalone as well as of vermelone. Is also able to dehydrate the alternate substrate 2,3-dihydro-2,5-dihydroxy-4H-benzopyran-4-one (DDBO) to 5-hydroxy-4H-1-benzopyran-4-one (HBO). The protein is Scytalone dehydratase (SDH1) of Pyricularia oryzae (strain 70-15 / ATCC MYA-4617 / FGSC 8958) (Rice blast fungus).